A 304-amino-acid polypeptide reads, in one-letter code: MRHDHIISAKQLSRGDIETVLDHAADIAADPGAFADRHSDTLLGLLFFEPSTRTKMSFTTAMKRLGGDIVDMGSVESSSVKKGESLADTVRVVEGYTDALVLRHPMEGSAKMASEFVDVPLVNAGDGAGQHPTQTLLDLYTIRENAGFDDLTIGIMGDLKYGRTVHSLAHALTTVDASQHFISPESLQLPRSVRYDLHEAGAGIREHTELDDILPELDVLYVTRIQAERFPDESEYREVAGQYQIDGDTLAAAKDDLTVMHPLPRVDEIAHDVDETTHAQYFQQAHNGVPVRMALLDLMLGGDQ.

R53 and T54 together coordinate carbamoyl phosphate. Residue K82 coordinates L-aspartate. R103, H131, and Q134 together coordinate carbamoyl phosphate. R163 and R224 together coordinate L-aspartate. 2 residues coordinate carbamoyl phosphate: L263 and P264.

It belongs to the aspartate/ornithine carbamoyltransferase superfamily. ATCase family. As to quaternary structure, heterooligomer of catalytic and regulatory chains.

The enzyme catalyses carbamoyl phosphate + L-aspartate = N-carbamoyl-L-aspartate + phosphate + H(+). Its pathway is pyrimidine metabolism; UMP biosynthesis via de novo pathway; (S)-dihydroorotate from bicarbonate: step 2/3. Catalyzes the condensation of carbamoyl phosphate and aspartate to form carbamoyl aspartate and inorganic phosphate, the committed step in the de novo pyrimidine nucleotide biosynthesis pathway. The chain is Aspartate carbamoyltransferase catalytic subunit from Haloarcula marismortui (strain ATCC 43049 / DSM 3752 / JCM 8966 / VKM B-1809) (Halobacterium marismortui).